A 337-amino-acid polypeptide reads, in one-letter code: 2-oxoglutarate-dependent ethylene/succinate-forming enzyme (337 aa).

In terms of domain architecture, Fe2OG dioxygenase spans 166–286; it reads GWHHMRVLRF…RFACAYFHEP (121 aa). The Fe cation site is built by His189 and His268.

This sequence belongs to the iron/ascorbate-dependent oxidoreductase family. As to quaternary structure, monomer. Fe(2+) is required as a cofactor.

It carries out the reaction 2-oxoglutarate + O2 + 2 H(+) = ethene + 3 CO2 + H2O. The catalysed reaction is L-arginine + 2-oxoglutarate + O2 = guanidine + L-glutamate 5-semialdehyde + succinate + CO2. It functions in the pathway alkene biosynthesis; ethylene biosynthesis via 2-oxoglutarate. Its function is as follows. Simultaneously catalyzes two reactions, namely formation of ethylene and of succinate from 2-oxoglutarate. The chain is 2-oxoglutarate-dependent ethylene/succinate-forming enzyme (efe) from Pseudomonas syringae pv. pisi.